We begin with the raw amino-acid sequence, 227 residues long: Phosphoribosylformylglycinamidine synthase subunit PurQ (227 aa).

The region spanning 3-225 is the Glutamine amidotransferase type-1 domain; the sequence is FAVIVFPGSN…LKQWRETYVV (223 aa). The active-site Nucleophile is Cys86. Active-site residues include His194 and Glu196.

In terms of assembly, part of the FGAM synthase complex composed of 1 PurL, 1 PurQ and 2 PurS subunits.

The protein localises to the cytoplasm. The enzyme catalyses N(2)-formyl-N(1)-(5-phospho-beta-D-ribosyl)glycinamide + L-glutamine + ATP + H2O = 2-formamido-N(1)-(5-O-phospho-beta-D-ribosyl)acetamidine + L-glutamate + ADP + phosphate + H(+). It catalyses the reaction L-glutamine + H2O = L-glutamate + NH4(+). It functions in the pathway purine metabolism; IMP biosynthesis via de novo pathway; 5-amino-1-(5-phospho-D-ribosyl)imidazole from N(2)-formyl-N(1)-(5-phospho-D-ribosyl)glycinamide: step 1/2. Its function is as follows. Part of the phosphoribosylformylglycinamidine synthase complex involved in the purines biosynthetic pathway. Catalyzes the ATP-dependent conversion of formylglycinamide ribonucleotide (FGAR) and glutamine to yield formylglycinamidine ribonucleotide (FGAM) and glutamate. The FGAM synthase complex is composed of three subunits. PurQ produces an ammonia molecule by converting glutamine to glutamate. PurL transfers the ammonia molecule to FGAR to form FGAM in an ATP-dependent manner. PurS interacts with PurQ and PurL and is thought to assist in the transfer of the ammonia molecule from PurQ to PurL. This is Phosphoribosylformylglycinamidine synthase subunit PurQ from Bacillus mycoides (strain KBAB4) (Bacillus weihenstephanensis).